We begin with the raw amino-acid sequence, 85 residues long: Small ribosomal subunit protein bS16c (85 aa).

Belongs to the bacterial ribosomal protein bS16 family.

The protein localises to the plastid. Its subcellular location is the chloroplast. In Agrostis stolonifera (Creeping bentgrass), this protein is Small ribosomal subunit protein bS16c.